Reading from the N-terminus, the 395-residue chain is Zinc finger protein 200 (395 aa).

A disordered region spans residues 157–208 (VNGSNPEGEDPEREPVENEDYREKSSDDDEMDSSLVSQQPPDNQEKERLNTS). Residues 169-181 (REPVENEDYREKS) show a composition bias toward basic and acidic residues. Residues 246–395 (RRTRRWYTCP…HSACKTRKQK (150 aa)) are interaction with PRMT3. 5 C2H2-type zinc fingers span residues 252 to 274 (YTCPLCGKQFNESSYLISHQRTH), 280 to 302 (YDCNHCGKSFNHKTNLNKHERIH), 308 to 330 (YSCSQCGKNFRQNSHRSRHEGIH), 336 to 358 (FKCPECGKTFPKNEEFVLHLQSH), and 364 to 386 (YGCKKCGRRFGRLSNCTRHEKTH).

Interacts (via C-terminus) with PRMT3 (via zinc-finger); the interaction is direct and required to localize protein arginine N-methyltransferase PRMT3 to the nucleus and inhibit its proteasomal degradation. Highly expressed in testis, weakly expressed in spleen, thymus, prostate, ovary, small intestine colon and peripheral blood leukocytes.

It localises to the nucleus. In terms of biological role, localizes protein arginine N-methyltransferase PRMT3 to the nucleus. This Homo sapiens (Human) protein is Zinc finger protein 200 (ZNF200).